Reading from the N-terminus, the 139-residue chain is Glucanase inhibitor protein 3 (139 aa).

A Peptidase S1 domain is found at 1–138 (VLTLEKPSKF…GIEWINSVIK (138 aa)). 2 disulfides stabilise this stretch: Cys61/Cys73 and Cys83/Cys114.

It belongs to the peptidase S1 family.

Its subcellular location is the secreted. Its function is as follows. Secreted effector that suppresses host plant glucan elicitor-mediated defense responses. Targets host endoglucanases and inhibits the endoglucanase-mediated release of elicitor-active glucan oligosaccharides from P.sojae cell walls. This chain is Glucanase inhibitor protein 3, found in Phytophthora sojae (Soybean stem and root rot agent).